The following is a 236-amino-acid chain: Probable 6-phosphogluconolactonase (236 aa).

The protein belongs to the glucosamine/galactosamine-6-phosphate isomerase family. 6-phosphogluconolactonase subfamily.

It carries out the reaction 6-phospho-D-glucono-1,5-lactone + H2O = 6-phospho-D-gluconate + H(+). It functions in the pathway carbohydrate degradation; pentose phosphate pathway; D-ribulose 5-phosphate from D-glucose 6-phosphate (oxidative stage): step 2/3. Its function is as follows. Hydrolysis of 6-phosphogluconolactone to 6-phosphogluconate. The polypeptide is Probable 6-phosphogluconolactonase (pgl) (Dictyostelium discoideum (Social amoeba)).